The primary structure comprises 483 residues: Protein disulfide-isomerase 5-3 (483 aa).

N53, N74, and N99 each carry an N-linked (GlcNAc...) asparagine glycan. Residues 133–263 (EETKEEFPDG…IVKMVEGLVA (131 aa)) enclose the Thioredoxin domain. The active-site Nucleophile is the C170. 3 N-linked (GlcNAc...) asparagine glycosylation sites follow: N279, N326, and N376. The helical transmembrane segment at 442–462 (FSHFITNLCAIIGGVFTVAGI) threads the bilayer.

This sequence belongs to the protein disulfide isomerase family. Widely expressed.

It is found in the membrane. In terms of biological role, acts as a protein-folding catalyst that interacts with nascent polypeptides to catalyze the formation, isomerization, and reduction or oxidation of disulfide bonds. This chain is Protein disulfide-isomerase 5-3 (PDIL5-3), found in Arabidopsis thaliana (Mouse-ear cress).